Here is a 350-residue protein sequence, read N- to C-terminus: 3-dehydroquinate synthase (350 aa).

NAD(+) contacts are provided by residues 106-110 (GVIGD), 130-131 (TS), K143, and K152. 3 residues coordinate Zn(2+): E185, H246, and H263.

Belongs to the sugar phosphate cyclases superfamily. Dehydroquinate synthase family. Co(2+) serves as cofactor. Zn(2+) is required as a cofactor. It depends on NAD(+) as a cofactor.

Its subcellular location is the cytoplasm. The catalysed reaction is 7-phospho-2-dehydro-3-deoxy-D-arabino-heptonate = 3-dehydroquinate + phosphate. It participates in metabolic intermediate biosynthesis; chorismate biosynthesis; chorismate from D-erythrose 4-phosphate and phosphoenolpyruvate: step 2/7. In terms of biological role, catalyzes the conversion of 3-deoxy-D-arabino-heptulosonate 7-phosphate (DAHP) to dehydroquinate (DHQ). The protein is 3-dehydroquinate synthase of Clostridium beijerinckii (strain ATCC 51743 / NCIMB 8052) (Clostridium acetobutylicum).